The primary structure comprises 184 residues: uncharacterized protein (184 aa).

The signal sequence occupies residues 1–23; it reads MFCLLHLCFYLANFASSIKRTHA.

The protein resides in the secreted. This is an uncharacterized protein from Homo sapiens (Human).